The sequence spans 571 residues: Proline--tRNA ligase (571 aa).

It belongs to the class-II aminoacyl-tRNA synthetase family. ProS type 1 subfamily. In terms of assembly, homodimer.

It localises to the cytoplasm. It catalyses the reaction tRNA(Pro) + L-proline + ATP = L-prolyl-tRNA(Pro) + AMP + diphosphate. In terms of biological role, catalyzes the attachment of proline to tRNA(Pro) in a two-step reaction: proline is first activated by ATP to form Pro-AMP and then transferred to the acceptor end of tRNA(Pro). As ProRS can inadvertently accommodate and process non-cognate amino acids such as alanine and cysteine, to avoid such errors it has two additional distinct editing activities against alanine. One activity is designated as 'pretransfer' editing and involves the tRNA(Pro)-independent hydrolysis of activated Ala-AMP. The other activity is designated 'posttransfer' editing and involves deacylation of mischarged Ala-tRNA(Pro). The misacylated Cys-tRNA(Pro) is not edited by ProRS. The sequence is that of Proline--tRNA ligase from Aliivibrio salmonicida (strain LFI1238) (Vibrio salmonicida (strain LFI1238)).